The following is a 147-amino-acid chain: Large ribosomal subunit protein uL13 (147 aa).

It belongs to the universal ribosomal protein uL13 family. Part of the 50S ribosomal subunit.

In terms of biological role, this protein is one of the early assembly proteins of the 50S ribosomal subunit, although it is not seen to bind rRNA by itself. It is important during the early stages of 50S assembly. This Mycolicibacterium paratuberculosis (strain ATCC BAA-968 / K-10) (Mycobacterium paratuberculosis) protein is Large ribosomal subunit protein uL13.